Consider the following 548-residue polypeptide: Chaperonin GroEL (548 aa).

ATP contacts are provided by residues 30 to 33 (TLGP), Lys51, 87 to 91 (DGTTT), Gly415, 479 to 481 (NAA), and Asp495.

It belongs to the chaperonin (HSP60) family. Forms a cylinder of 14 subunits composed of two heptameric rings stacked back-to-back. Interacts with the co-chaperonin GroES.

The protein resides in the cytoplasm. It catalyses the reaction ATP + H2O + a folded polypeptide = ADP + phosphate + an unfolded polypeptide.. In terms of biological role, together with its co-chaperonin GroES, plays an essential role in assisting protein folding. The GroEL-GroES system forms a nano-cage that allows encapsulation of the non-native substrate proteins and provides a physical environment optimized to promote and accelerate protein folding. The sequence is that of Chaperonin GroEL from Vibrio campbellii (strain ATCC BAA-1116).